The chain runs to 333 residues: Low specificity L-threonine aldolase (333 aa).

The residue at position 197 (Lys197) is an N6-(pyridoxal phosphate)lysine.

It belongs to the threonine aldolase family. As to quaternary structure, homotetramer. Pyridoxal 5'-phosphate is required as a cofactor.

The enzyme catalyses L-threonine = acetaldehyde + glycine. It carries out the reaction L-allo-threonine = acetaldehyde + glycine. In terms of biological role, catalyzes the cleavage of L-allo-threonine and L-threonine to glycine and acetaldehyde. L-threo-phenylserine and L-erythro-phenylserine are also good substrates. The polypeptide is Low specificity L-threonine aldolase (ltaE) (Escherichia coli O157:H7).